The chain runs to 122 residues: UPF0102 protein TTE1452 (122 aa).

The protein belongs to the UPF0102 family.

The protein is UPF0102 protein TTE1452 of Caldanaerobacter subterraneus subsp. tengcongensis (strain DSM 15242 / JCM 11007 / NBRC 100824 / MB4) (Thermoanaerobacter tengcongensis).